Reading from the N-terminus, the 464-residue chain is Armadillo repeat-containing protein 6 homolog (464 aa).

Phosphothreonine is present on T9. ARM repeat units lie at residues 235 to 275 (AHEH…TLAV), 287 to 331 (GGLK…QQGV), 332 to 374 (APII…FDTG), and 375 to 418 (IAEV…ISFG).

The protein belongs to the ARMC6 family.

In Drosophila melanogaster (Fruit fly), this protein is Armadillo repeat-containing protein 6 homolog.